The following is a 378-amino-acid chain: Septin-5 (378 aa).

A Septin-type G domain is found at 50–323; that stretch reads KGFDFTLMVA…ENYRAHCIQQ (274 aa). A G1 motif region spans residues 60-67; it reads GESGLGKS. Residues 60 to 67, Thr-94, and Gly-120 each bind GTP; that span reads GESGLGKS. Positions 117-120 are G3 motif; sequence DTPG. Arg-177 bears the Omega-N-methylarginine mark. The tract at residues 198–201 is G4 motif; sequence AKAD. Position 199–207 (199–207) interacts with GTP; the sequence is KADCLVPSE. Residue Ser-234 is modified to Phosphoserine. Gly-257 and Arg-272 together coordinate GTP. Position 336 is a phosphoserine (Ser-336). Residue Thr-345 is modified to Phosphothreonine. Residues 347-378 adopt a coiled-coil conformation; the sequence is DAETEKLIRMKDEELRRMQEMLQRMKQQMQDQ.

It belongs to the TRAFAC class TrmE-Era-EngA-EngB-Septin-like GTPase superfamily. Septin GTPase family. As to quaternary structure, septins polymerize into heterooligomeric protein complexes that form filaments, and can associate with cellular membranes, actin filaments and microtubules. GTPase activity is required for filament formation. Interacts with SEPTIN2 and SEPTIN5. In platelets, associated with a complex containing STX4. Interacts with PRKN; this interaction leads to SEPTIN5 ubiquitination and degradation. Interacts with DYRK1A. Interacts with STX1A; in the cerebellar cortex. Post-translationally, phosphorylated by DYRK1A.

The protein localises to the cytoplasm. It localises to the cytoskeleton. Filament-forming cytoskeletal GTPase. May play a role in cytokinesis (Potential). May play a role in platelet secretion. This chain is Septin-5, found in Macaca fascicularis (Crab-eating macaque).